The following is a 262-amino-acid chain: Phosphatidylserine decarboxylase proenzyme (262 aa).

Catalysis depends on charge relay system; for autoendoproteolytic cleavage activity residues Asp-86, His-142, and Ser-226. Ser-226 serves as the catalytic Schiff-base intermediate with substrate; via pyruvic acid; for decarboxylase activity. A Pyruvic acid (Ser); by autocatalysis modification is found at Ser-226.

This sequence belongs to the phosphatidylserine decarboxylase family. PSD-B subfamily. Prokaryotic type I sub-subfamily. In terms of assembly, heterodimer of a large membrane-associated beta subunit and a small pyruvoyl-containing alpha subunit. Pyruvate serves as cofactor. Post-translationally, is synthesized initially as an inactive proenzyme. Formation of the active enzyme involves a self-maturation process in which the active site pyruvoyl group is generated from an internal serine residue via an autocatalytic post-translational modification. Two non-identical subunits are generated from the proenzyme in this reaction, and the pyruvate is formed at the N-terminus of the alpha chain, which is derived from the carboxyl end of the proenzyme. The autoendoproteolytic cleavage occurs by a canonical serine protease mechanism, in which the side chain hydroxyl group of the serine supplies its oxygen atom to form the C-terminus of the beta chain, while the remainder of the serine residue undergoes an oxidative deamination to produce ammonia and the pyruvoyl prosthetic group on the alpha chain. During this reaction, the Ser that is part of the protease active site of the proenzyme becomes the pyruvoyl prosthetic group, which constitutes an essential element of the active site of the mature decarboxylase.

The protein resides in the cell membrane. The enzyme catalyses a 1,2-diacyl-sn-glycero-3-phospho-L-serine + H(+) = a 1,2-diacyl-sn-glycero-3-phosphoethanolamine + CO2. It functions in the pathway phospholipid metabolism; phosphatidylethanolamine biosynthesis; phosphatidylethanolamine from CDP-diacylglycerol: step 2/2. Catalyzes the formation of phosphatidylethanolamine (PtdEtn) from phosphatidylserine (PtdSer). This chain is Phosphatidylserine decarboxylase proenzyme, found in Bacillus thuringiensis subsp. konkukian (strain 97-27).